We begin with the raw amino-acid sequence, 189 residues long: Potassium-transporting ATPase KdpC subunit (189 aa).

A helical membrane pass occupies residues Pro6–Val26.

It belongs to the KdpC family. In terms of assembly, the system is composed of three essential subunits: KdpA, KdpB and KdpC.

It localises to the cell inner membrane. Functionally, part of the high-affinity ATP-driven potassium transport (or Kdp) system, which catalyzes the hydrolysis of ATP coupled with the electrogenic transport of potassium into the cytoplasm. This subunit acts as a catalytic chaperone that increases the ATP-binding affinity of the ATP-hydrolyzing subunit KdpB by the formation of a transient KdpB/KdpC/ATP ternary complex. This is Potassium-transporting ATPase KdpC subunit from Geobacter sulfurreducens (strain ATCC 51573 / DSM 12127 / PCA).